The chain runs to 81 residues: Sec-independent protein translocase protein TatA (81 aa).

The helical transmembrane segment at 1 to 21 (MGGISIWQLLIVALIVILLFG) threads the bilayer. The disordered stretch occupies residues 34-81 (GAVKGFKNAMTPEDENKSLDDKEKDQTAATSQQAAEKQPETESKDKQA). 2 stretches are compositionally biased toward basic and acidic residues: residues 47–59 (DENK…EKDQ) and 70–81 (KQPETESKDKQA).

The protein belongs to the TatA/E family. As to quaternary structure, the Tat system comprises two distinct complexes: a TatABC complex, containing multiple copies of TatA, TatB and TatC subunits, and a separate TatA complex, containing only TatA subunits. Substrates initially bind to the TatABC complex, which probably triggers association of the separate TatA complex to form the active translocon.

Its subcellular location is the cell inner membrane. Part of the twin-arginine translocation (Tat) system that transports large folded proteins containing a characteristic twin-arginine motif in their signal peptide across membranes. TatA could form the protein-conducting channel of the Tat system. This is Sec-independent protein translocase protein TatA from Shewanella frigidimarina (strain NCIMB 400).